Reading from the N-terminus, the 172-residue chain is Large ribosomal subunit protein uL10 (172 aa).

The protein belongs to the universal ribosomal protein uL10 family. As to quaternary structure, part of the ribosomal stalk of the 50S ribosomal subunit. The N-terminus interacts with L11 and the large rRNA to form the base of the stalk. The C-terminus forms an elongated spine to which L12 dimers bind in a sequential fashion forming a multimeric L10(L12)X complex.

Its function is as follows. Forms part of the ribosomal stalk, playing a central role in the interaction of the ribosome with GTP-bound translation factors. The chain is Large ribosomal subunit protein uL10 from Acidothermus cellulolyticus (strain ATCC 43068 / DSM 8971 / 11B).